Reading from the N-terminus, the 212-residue chain is ATP phosphoribosyltransferase 2 (212 aa).

It belongs to the ATP phosphoribosyltransferase family. Short subfamily. Heteromultimer composed of HisG and HisZ subunits.

The protein localises to the cytoplasm. It catalyses the reaction 1-(5-phospho-beta-D-ribosyl)-ATP + diphosphate = 5-phospho-alpha-D-ribose 1-diphosphate + ATP. It functions in the pathway amino-acid biosynthesis; L-histidine biosynthesis; L-histidine from 5-phospho-alpha-D-ribose 1-diphosphate: step 1/9. Catalyzes the condensation of ATP and 5-phosphoribose 1-diphosphate to form N'-(5'-phosphoribosyl)-ATP (PR-ATP). Has a crucial role in the pathway because the rate of histidine biosynthesis seems to be controlled primarily by regulation of HisG enzymatic activity. The protein is ATP phosphoribosyltransferase 2 (hisG2) of Geobacter sulfurreducens (strain ATCC 51573 / DSM 12127 / PCA).